Here is a 476-residue protein sequence, read N- to C-terminus: ATP synthase subunit beta (476 aa).

G154–T161 contributes to the ATP binding site.

This sequence belongs to the ATPase alpha/beta chains family. As to quaternary structure, F-type ATPases have 2 components, CF(1) - the catalytic core - and CF(0) - the membrane proton channel. CF(1) has five subunits: alpha(3), beta(3), gamma(1), delta(1), epsilon(1). CF(0) has three main subunits: a(1), b(2) and c(9-12). The alpha and beta chains form an alternating ring which encloses part of the gamma chain. CF(1) is attached to CF(0) by a central stalk formed by the gamma and epsilon chains, while a peripheral stalk is formed by the delta and b chains.

The protein localises to the cell inner membrane. It catalyses the reaction ATP + H2O + 4 H(+)(in) = ADP + phosphate + 5 H(+)(out). In terms of biological role, produces ATP from ADP in the presence of a proton gradient across the membrane. The catalytic sites are hosted primarily by the beta subunits. This is ATP synthase subunit beta from Nitrobacter hamburgensis (strain DSM 10229 / NCIMB 13809 / X14).